The chain runs to 393 residues: S-adenosylmethionine synthase (393 aa).

Residue His-16 coordinates ATP. A Mg(2+)-binding site is contributed by Asp-18. Glu-44 contacts K(+). L-methionine-binding residues include Glu-57 and Gln-100. The interval 100 to 110 (QSPDIVMGVDG) is flexible loop. ATP is bound by residues 165-167 (DAK), 231-232 (RF), Asp-240, 246-247 (RK), and Lys-267. Position 240 (Asp-240) interacts with L-methionine. L-methionine is bound at residue Lys-271.

This sequence belongs to the AdoMet synthase family. In terms of assembly, homotetramer; dimer of dimers. The cofactor is Mg(2+). K(+) is required as a cofactor.

The protein resides in the cytoplasm. It carries out the reaction L-methionine + ATP + H2O = S-adenosyl-L-methionine + phosphate + diphosphate. Its pathway is amino-acid biosynthesis; S-adenosyl-L-methionine biosynthesis; S-adenosyl-L-methionine from L-methionine: step 1/1. Its function is as follows. Catalyzes the formation of S-adenosylmethionine (AdoMet) from methionine and ATP. The overall synthetic reaction is composed of two sequential steps, AdoMet formation and the subsequent tripolyphosphate hydrolysis which occurs prior to release of AdoMet from the enzyme. The sequence is that of S-adenosylmethionine synthase from Coxiella burnetii (strain Dugway 5J108-111).